The sequence spans 256 residues: 5'-nucleotidase SurE (256 aa).

Residues D13, D14, S44, and N101 each coordinate a divalent metal cation.

It belongs to the SurE nucleotidase family. A divalent metal cation serves as cofactor.

It localises to the cytoplasm. The catalysed reaction is a ribonucleoside 5'-phosphate + H2O = a ribonucleoside + phosphate. Its function is as follows. Nucleotidase that shows phosphatase activity on nucleoside 5'-monophosphates. The polypeptide is 5'-nucleotidase SurE (Porphyromonas gingivalis (strain ATCC 33277 / DSM 20709 / CIP 103683 / JCM 12257 / NCTC 11834 / 2561)).